The following is a 267-amino-acid chain: Outer membrane protein assembly factor BamD (267 aa).

Positions 1-16 (MKKILLTVSLGLALSA) are cleaved as a signal peptide. Cysteine 17 carries the N-palmitoyl cysteine lipid modification. Cysteine 17 carries the S-diacylglycerol cysteine lipid modification.

This sequence belongs to the BamD family. As to quaternary structure, part of the Bam complex.

It localises to the cell outer membrane. Functionally, part of the outer membrane protein assembly complex, which is involved in assembly and insertion of beta-barrel proteins into the outer membrane. Required for efficient transformation of Neisseria gonorrhoeae by species-related DNA. The chain is Outer membrane protein assembly factor BamD from Neisseria gonorrhoeae.